The chain runs to 160 residues: Deoxyuridine 5'-triphosphate nucleotidohydrolase (160 aa).

Residues 72–74 (RSG), Asn-85, and 89–91 (TID) each bind substrate.

This sequence belongs to the dUTPase family. Mg(2+) is required as a cofactor.

It carries out the reaction dUTP + H2O = dUMP + diphosphate + H(+). Its pathway is pyrimidine metabolism; dUMP biosynthesis; dUMP from dCTP (dUTP route): step 2/2. In terms of biological role, this enzyme is involved in nucleotide metabolism: it produces dUMP, the immediate precursor of thymidine nucleotides and it decreases the intracellular concentration of dUTP so that uracil cannot be incorporated into DNA. The sequence is that of Deoxyuridine 5'-triphosphate nucleotidohydrolase from Methylocella silvestris (strain DSM 15510 / CIP 108128 / LMG 27833 / NCIMB 13906 / BL2).